Reading from the N-terminus, the 227-residue chain is Cytochrome c oxidase subunit 2 (227 aa).

At 1–14 the chain is on the mitochondrial intermembrane side; it reads MAYPFQLGLQDATS. A helical transmembrane segment spans residues 15 to 45; sequence PIMEELTNFHDHTLMIVFLISSLVLYIISLM. Residues 46–59 lie on the Mitochondrial matrix side of the membrane; sequence LTTKLTHTNTMDAQ. Residues 60 to 87 traverse the membrane as a helical segment; sequence EVETIWTILPAVILILIALPSLRILYMM. The Mitochondrial intermembrane portion of the chain corresponds to 88–227; that stretch reads DEINNPALTV…HFENWSASMI (140 aa). Residues His161, Cys196, Glu198, Cys200, His204, and Met207 each coordinate Cu cation. Glu198 serves as a coordination point for Mg(2+).

The protein belongs to the cytochrome c oxidase subunit 2 family. As to quaternary structure, component of the cytochrome c oxidase (complex IV, CIV), a multisubunit enzyme composed of 14 subunits. The complex is composed of a catalytic core of 3 subunits MT-CO1, MT-CO2 and MT-CO3, encoded in the mitochondrial DNA, and 11 supernumerary subunits COX4I, COX5A, COX5B, COX6A, COX6B, COX6C, COX7A, COX7B, COX7C, COX8 and NDUFA4, which are encoded in the nuclear genome. The complex exists as a monomer or a dimer and forms supercomplexes (SCs) in the inner mitochondrial membrane with NADH-ubiquinone oxidoreductase (complex I, CI) and ubiquinol-cytochrome c oxidoreductase (cytochrome b-c1 complex, complex III, CIII), resulting in different assemblies (supercomplex SCI(1)III(2)IV(1) and megacomplex MCI(2)III(2)IV(2)). Found in a complex with TMEM177, COA6, COX18, COX20, SCO1 and SCO2. Interacts with TMEM177 in a COX20-dependent manner. Interacts with COX20. Interacts with COX16. It depends on Cu cation as a cofactor.

It localises to the mitochondrion inner membrane. It catalyses the reaction 4 Fe(II)-[cytochrome c] + O2 + 8 H(+)(in) = 4 Fe(III)-[cytochrome c] + 2 H2O + 4 H(+)(out). Component of the cytochrome c oxidase, the last enzyme in the mitochondrial electron transport chain which drives oxidative phosphorylation. The respiratory chain contains 3 multisubunit complexes succinate dehydrogenase (complex II, CII), ubiquinol-cytochrome c oxidoreductase (cytochrome b-c1 complex, complex III, CIII) and cytochrome c oxidase (complex IV, CIV), that cooperate to transfer electrons derived from NADH and succinate to molecular oxygen, creating an electrochemical gradient over the inner membrane that drives transmembrane transport and the ATP synthase. Cytochrome c oxidase is the component of the respiratory chain that catalyzes the reduction of oxygen to water. Electrons originating from reduced cytochrome c in the intermembrane space (IMS) are transferred via the dinuclear copper A center (CU(A)) of subunit 2 and heme A of subunit 1 to the active site in subunit 1, a binuclear center (BNC) formed by heme A3 and copper B (CU(B)). The BNC reduces molecular oxygen to 2 water molecules using 4 electrons from cytochrome c in the IMS and 4 protons from the mitochondrial matrix. In Sundamys muelleri (Mueller's giant sunda rat), this protein is Cytochrome c oxidase subunit 2 (MT-CO2).